The primary structure comprises 64 residues: Alpha-conotoxin-like Lp1.7 (64 aa).

A signal peptide spans 1-21 (MGMRMMFTMFLLVVLTTTVVS). The propeptide occupies 22–41 (FNSDRESNHENRRTSNQITR). Disulfide bonds link cysteine 47–cysteine 53 and cysteine 48–cysteine 61. The lacks the Ser-Xaa-Pro motif that is crucial for potent interaction with nAChR stretch occupies residues 49–51 (DDP).

This sequence belongs to the conotoxin A superfamily. Expressed by the venom duct.

Its subcellular location is the secreted. Alpha-conotoxins act on postsynaptic membranes, they bind to the nicotinic acetylcholine receptors (nAChR) and thus inhibit them. Has possibly a distinct nAChR binding mode from other alpha-conotoxins, due to a different three residue motif (lacks the Ser-Xaa-Pro motif). The chain is Alpha-conotoxin-like Lp1.7 from Conus leopardus (Leopard cone).